The following is a 919-amino-acid chain: Probable glucan 1,3-alpha-glucosidase (919 aa).

The signal sequence occupies residues Met1–Ala28. Asp510 serves as the catalytic Nucleophile. Residue Glu513 is part of the active site. Asp586 functions as the Proton donor in the catalytic mechanism. Residue Asn802 is glycosylated (N-linked (GlcNAc...) asparagine).

This sequence belongs to the glycosyl hydrolase 31 family. In terms of assembly, heterodimer of a catalytic alpha subunit and a beta subunit.

The protein resides in the endoplasmic reticulum. The catalysed reaction is N(4)-(alpha-D-Glc-(1-&gt;3)-alpha-D-Man-(1-&gt;2)-alpha-D-Man-(1-&gt;2)-alpha-D-Man-(1-&gt;3)-[alpha-D-Man-(1-&gt;2)-alpha-D-Man-(1-&gt;3)-[alpha-D-Man-(1-&gt;2)-alpha-D-Man-(1-&gt;6)]-alpha-D-Man-(1-&gt;6)]-beta-D-Man-(1-&gt;4)-beta-D-GlcNAc-(1-&gt;4)-beta-D-GlcNAc)-L-asparaginyl-[protein] + H2O = N(4)-(alpha-D-Man-(1-&gt;2)-alpha-D-Man-(1-&gt;2)-alpha-D-Man-(1-&gt;3)-[alpha-D-Man-(1-&gt;2)-alpha-D-Man-(1-&gt;3)-[alpha-D-Man-(1-&gt;2)-alpha-D-Man-(1-&gt;6)]-alpha-D-Man-(1-&gt;6)]-beta-D-Man-(1-&gt;4)-beta-D-GlcNAc-(1-&gt;4)-beta-D-GlcNAc)-L-asparaginyl-[protein] (N-glucan mannose isomer 9A1,2,3B1,2,3) + beta-D-glucose. The enzyme catalyses N(4)-(alpha-D-Glc-(1-&gt;3)-alpha-D-Glc-(1-&gt;3)-alpha-D-Man-(1-&gt;2)-alpha-D-Man-(1-&gt;2)-alpha-D-Man-(1-&gt;3)-[alpha-D-Man-(1-&gt;2)-alpha-D-Man-(1-&gt;3)-[alpha-D-Man-(1-&gt;2)-alpha-D-Man-(1-&gt;6)]-alpha-D-Man-(1-&gt;6)]-beta-D-Man-(1-&gt;4)-beta-D-GlcNAc-(1-&gt;4)-beta-D-GlcNAc)-L-asparaginyl-[protein] + H2O = N(4)-(alpha-D-Glc-(1-&gt;3)-alpha-D-Man-(1-&gt;2)-alpha-D-Man-(1-&gt;2)-alpha-D-Man-(1-&gt;3)-[alpha-D-Man-(1-&gt;2)-alpha-D-Man-(1-&gt;3)-[alpha-D-Man-(1-&gt;2)-alpha-D-Man-(1-&gt;6)]-alpha-D-Man-(1-&gt;6)]-beta-D-Man-(1-&gt;4)-beta-D-GlcNAc-(1-&gt;4)-beta-D-GlcNAc)-L-asparaginyl-[protein] + beta-D-glucose. It functions in the pathway glycan metabolism; N-glycan metabolism. Its function is as follows. Cleaves sequentially the 2 innermost alpha-1,3-linked glucose residues from the Glc(2)Man(9)GlcNAc(2) oligosaccharide precursor of immature glycoproteins. May be required for defense response elicited by pathogen-associated molecular patterns (PAMPs). The chain is Probable glucan 1,3-alpha-glucosidase from Oryza sativa subsp. japonica (Rice).